A 283-amino-acid polypeptide reads, in one-letter code: NAD kinase (283 aa).

The Proton acceptor role is filled by aspartate 73. NAD(+)-binding positions include 73-74 (DG), 146-147 (NE), histidine 157, histidine 176, aspartate 178, 189-194 (TAYNLS), and alanine 213.

Belongs to the NAD kinase family. A divalent metal cation serves as cofactor.

The protein localises to the cytoplasm. The catalysed reaction is NAD(+) + ATP = ADP + NADP(+) + H(+). In terms of biological role, involved in the regulation of the intracellular balance of NAD and NADP, and is a key enzyme in the biosynthesis of NADP. Catalyzes specifically the phosphorylation on 2'-hydroxyl of the adenosine moiety of NAD to yield NADP. This Haloarcula marismortui (strain ATCC 43049 / DSM 3752 / JCM 8966 / VKM B-1809) (Halobacterium marismortui) protein is NAD kinase.